A 326-amino-acid polypeptide reads, in one-letter code: Vomeronasal type-1 receptor 94 (326 aa).

Residues M1–T32 are Extracellular-facing. A helical membrane pass occupies residues F33–F53. Residues K54 to D65 are Cytoplasmic-facing. A helical transmembrane segment spans residues L66–A86. Residues T87–S110 lie on the Extracellular side of the membrane. Residues C101 and C188 are joined by a disulfide bond. A helical membrane pass occupies residues F111–L130. At S131–C150 the chain is on the cytoplasmic side. The chain crosses the membrane as a helical span at residues A151–I171. Residues A172–T203 lie on the Extracellular side of the membrane. A glycan (N-linked (GlcNAc...) asparagine) is linked at N175. The helical transmembrane segment at L204 to V224 threads the bilayer. Residues A225–H254 are Cytoplasmic-facing. Residues S255 to C275 traverse the membrane as a helical segment. Topologically, residues S276–T285 are extracellular. The helical transmembrane segment at S286–M306 threads the bilayer. The Cytoplasmic segment spans residues S307–V326.

This sequence belongs to the G-protein coupled receptor 1 family.

The protein resides in the cell membrane. In terms of biological role, putative pheromone receptor implicated in the regulation of social as well as reproductive behavior. In Rattus norvegicus (Rat), this protein is Vomeronasal type-1 receptor 94 (Vom1r94).